An 870-amino-acid chain; its full sequence is Importin subunit beta-1 (870 aa).

N-acetylalanine is present on Ala-2. HEAT repeat units lie at residues 4–33 (EVTQ…FQEQ), 35–67 (LAGF…KNAL), 87–126 (MSTK…ELPQ), 132–161 (LIVS…LCEE), 172–204 (VNKI…YMAL), 214–249 (DMER…IAST), 255–304 (AHYM…EFAG), 313–361 (FTKQ…RAVG), 365–395 (VPHV…GSIL), 403–440 (LMAI…IFEF), 456–492 (CQQI…EDIG), 498–535 (TPFF…EVVR), 542–588 (STMV…QVII), 596–637 (TKSK…AYAA), 642–679 (AKYM…CRAL), 684–722 (LPYC…ALAI), 730–776 (WRYS…FQGF), and 826–868 (SHVG…TRAI). The Importin N-terminal domain maps to 23 to 103 (AEESLKQFQE…RAFLLKTLSA (81 aa)).

It belongs to the importin beta family. Importin beta-1 subfamily. As to quaternary structure, forms a complex with the importin subunits alpha IMPA1 or IMPA2, the nucleoporin NUP62 and the Ran-GTP-binding proteins RAN1, RAN2 or RAN3. As to expression, expressed in roots, cotyledons, leaves, stems, petals, stamen, stigma, siliques, embryos and guard cells.

Its subcellular location is the cytoplasm. The protein localises to the nucleus. In terms of biological role, acts as a negative effector of drought tolerance. Involved in the regulation of stomatal closure and in the abscisic acid (ABA)-mediated pathway that lead to drought tolerance. Does not directly mediate nuclear import of ABI1 and ABI2 which are key regulators of the ABA signaling pathway. May be involved in nuclear translocation of other type 2C protein phosphatases that mediate ABA signaling. The chain is Importin subunit beta-1 from Arabidopsis thaliana (Mouse-ear cress).